The primary structure comprises 141 residues: Transcription antitermination protein NusB (141 aa).

It belongs to the NusB family.

In terms of biological role, involved in transcription antitermination. Required for transcription of ribosomal RNA (rRNA) genes. Binds specifically to the boxA antiterminator sequence of the ribosomal RNA (rrn) operons. This chain is Transcription antitermination protein NusB, found in Clostridium botulinum (strain Loch Maree / Type A3).